A 352-amino-acid polypeptide reads, in one-letter code: Holliday junction branch migration complex subunit RuvB (352 aa).

Residues 4–185 are large ATPase domain (RuvB-L); that stretch reads PDRLISAVSG…FGIVQRLEFY (182 aa). Residues Ile24, Arg25, Gly66, Lys69, Thr70, Thr71, 132-134, Arg175, Tyr185, and Arg222 each bind ATP; that span reads EDF. Position 70 (Thr70) interacts with Mg(2+). Residues 186-256 form a small ATPAse domain (RuvB-S) region; sequence NVEDLATIVS…IADKALNLLD (71 aa). The segment at 259–352 is head domain (RuvB-H); that stretch reads ERGFDHLDRR…SDLFTSEDGN (94 aa). 3 residues coordinate DNA: Arg295, Arg314, and Arg319.

This sequence belongs to the RuvB family. In terms of assembly, homohexamer. Forms an RuvA(8)-RuvB(12)-Holliday junction (HJ) complex. HJ DNA is sandwiched between 2 RuvA tetramers; dsDNA enters through RuvA and exits via RuvB. An RuvB hexamer assembles on each DNA strand where it exits the tetramer. Each RuvB hexamer is contacted by two RuvA subunits (via domain III) on 2 adjacent RuvB subunits; this complex drives branch migration. In the full resolvosome a probable DNA-RuvA(4)-RuvB(12)-RuvC(2) complex forms which resolves the HJ.

Its subcellular location is the cytoplasm. It catalyses the reaction ATP + H2O = ADP + phosphate + H(+). Functionally, the RuvA-RuvB-RuvC complex processes Holliday junction (HJ) DNA during genetic recombination and DNA repair, while the RuvA-RuvB complex plays an important role in the rescue of blocked DNA replication forks via replication fork reversal (RFR). RuvA specifically binds to HJ cruciform DNA, conferring on it an open structure. The RuvB hexamer acts as an ATP-dependent pump, pulling dsDNA into and through the RuvAB complex. RuvB forms 2 homohexamers on either side of HJ DNA bound by 1 or 2 RuvA tetramers; 4 subunits per hexamer contact DNA at a time. Coordinated motions by a converter formed by DNA-disengaged RuvB subunits stimulates ATP hydrolysis and nucleotide exchange. Immobilization of the converter enables RuvB to convert the ATP-contained energy into a lever motion, pulling 2 nucleotides of DNA out of the RuvA tetramer per ATP hydrolyzed, thus driving DNA branch migration. The RuvB motors rotate together with the DNA substrate, which together with the progressing nucleotide cycle form the mechanistic basis for DNA recombination by continuous HJ branch migration. Branch migration allows RuvC to scan DNA until it finds its consensus sequence, where it cleaves and resolves cruciform DNA. The polypeptide is Holliday junction branch migration complex subunit RuvB (Pseudomonas paraeruginosa (strain DSM 24068 / PA7) (Pseudomonas aeruginosa (strain PA7))).